Consider the following 181-residue polypeptide: Large ribosomal subunit protein uL5c (181 aa).

It belongs to the universal ribosomal protein uL5 family. Part of the 50S ribosomal subunit; contacts the 5S rRNA.

The protein localises to the plastid. Its subcellular location is the chloroplast. Binds 5S rRNA, forms part of the central protuberance of the 50S subunit. The chain is Large ribosomal subunit protein uL5c (rpl5) from Porphyra purpurea (Red seaweed).